Here is a 270-residue protein sequence, read N- to C-terminus: MDSKVTTYAVLGSTGNCGSALIRNLLGKPQSRVHAFCRNKKKLLRLIPEIADSKQVEVFEGGMQDHDLLAACIKNTRAVFMCISTNDNVPGCRLSQDSAIALVKVMRELGYDKPDGGPNGPAPKLLLLSSGTIDPHLSKHLPSLLLWILKRSASHVYADLEKAEEFLRAQESWLTTIYIKPGALSVDKKRGYELSLTEQKDPVSYLDLSAGMIEAADDPEGRWDLKNISVNCGSTPAGFPDGTILCILMGLLRHYFPWTHAYLPMGMGPK.

The protein belongs to the avfA family.

Its pathway is pigment biosynthesis. Functionally, oxidoreductase; part of the gene cluster that mediates the biosynthesis of the bianthraquinone cladofulvin, a conidial pigment not required for virulence but that plays a role in fitness and resistance to environmental stresses including UV light and low-temperature stress. The pathway begins with the synthesis of atrochrysone thioester by the polyketide synthase (PKS) claG. The atrochrysone carboxyl ACP thioesterase claF then breaks the thioester bond and releases the atrochrysone carboxylic acid from claG. This compound is decarboxylated by claH to yield emodin, which is further converted to chrysophanol hydroquinone by the reductase claC and the dehydratase claB. The cytochrome monooxygenase P450 claM then catalyzes the dimerization of nataloe-emodin to cladofulvin. The sequence is that of Oxidoreductase claK from Passalora fulva (Tomato leaf mold).